Reading from the N-terminus, the 562-residue chain is Putative transport protein ETA_21820 (562 aa).

The next 5 membrane-spanning stretches (helical) occupy residues 8–28 (LLIGNHILLLFVVLALGLCLG), 32–52 (LGSVQLGNSIGVLVVSLLLGQ), 66–86 (FMLFIFCVGVEAGPNFFSIFF), 94–114 (MLAIVMVSSAMVLALGLGKLF), and 158–178 (HLSLGYALTYLVGLVSLIFGA). 2 consecutive RCK C-terminal domains span residues 202–288 (LDPD…SFRN) and 290–373 (KEVF…RIGF). 6 helical membrane passes run 383 to 403 (LLAFCAFFILGLMIGMITFQF), 406 to 426 (FNFGIGNAAGLLFAGIMLGFL), 440 to 460 (ALTMVKEFGLMVFMAGVGLSA), 473 to 493 (LLMLGAGLIVSLVPVVICFLF), 503 to 523 (ALLFGAIMGARTCAPAMEIIS), and 540 to 560 (AIANVLLTLAGTLIVIIWPIL).

It belongs to the AAE transporter (TC 2.A.81) family. YbjL subfamily.

The protein resides in the cell membrane. This is Putative transport protein ETA_21820 from Erwinia tasmaniensis (strain DSM 17950 / CFBP 7177 / CIP 109463 / NCPPB 4357 / Et1/99).